We begin with the raw amino-acid sequence, 325 residues long: RNA ligase 1 (325 aa).

Mg(2+) serves as cofactor. Requires Mn(2+) as cofactor. Post-translationally, AMPylates itself (auto-AMPylation).

The enzyme catalyses ATP + (ribonucleotide)n-3'-hydroxyl + 5'-phospho-(ribonucleotide)m = (ribonucleotide)n+m + AMP + diphosphate.. In terms of biological role, functions as an RNA ligase, in vitro. The ligation reaction entails three nucleotidyl transfer steps. In the first step, the RNA ligase reacts with ATP in the absence of nucleic acid to form a covalent ligase-AMP intermediate and release pyrophosphate. In step 2, the ligase-AMP binds to the nucleic acid and transfers the adenylate to the 5'-PO4 terminus to form an adenylylated intermediate. In step 3, the RNA ligase directs the attack of the 3'-OH on the 5'-phosphoanhydride linkage, resulting in a repaired 3'-5' phosphodiester and release of AMP. Exhibits selectivity for single-stranded RNA substrates and may not have nick-sealing activity on double-stranded DNA-RNA hybrids. May play a role in maintaining RNA integrity under stress conditions, for example in response to reactive oxygen species (ROS). This chain is RNA ligase 1, found in Rattus norvegicus (Rat).